A 168-amino-acid chain; its full sequence is D-aminoacyl-tRNA deacylase 2 (168 aa).

The short motif at G160 to P161 is the Gly-transPro motif, allows the protein to recognize chirality of D-amino acids element.

It belongs to the DTD family. In terms of assembly, homodimer.

The protein localises to the cytoplasm. It carries out the reaction a D-aminoacyl-tRNA + H2O = a tRNA + a D-alpha-amino acid + H(+). The catalysed reaction is glycyl-tRNA(Ala) + H2O = tRNA(Ala) + glycine + H(+). The enzyme catalyses D-tyrosyl-tRNA(Tyr) + H2O = D-tyrosine + tRNA(Tyr). It catalyses the reaction L-alanyl-tRNA(Thr) + H2O = tRNA(Thr) + L-alanine + H(+). Deacylates mischarged D-aminoacyl-tRNAs. Also deacylates mischarged glycyl-tRNA(Ala), protecting cells against glycine mischarging by AlaRS. Probably acts by rejecting L-amino acids from its binding site rather than specific recognition of D-amino acids. Catalyzes the hydrolysis of D-tyrosyl-tRNA(Tyr), has no activity on correctly charged L-tyrosyl-tRNA(Tyr). By recycling D-aminoacyl-tRNA to D-amino acids and free tRNA molecules, this enzyme counteracts the toxicity associated with the formation of D-aminoacyl-tRNA entities in vivo and helps enforce protein L-homochirality. In contrast to DTD1, deacylates L-Ala mischarged on tRNA(Thr)(G4.U69) by alanine-tRNA ligase AARS. Can deacylate L-Ala due to a relaxed specificity for substrate chirality caused by the trans conformation of the Gly-Pro motif in the active site. Also hydrolyzes correctly charged, achiral, glycyl-tRNA(Gly) in vitro, although in vivo EEF1A1/EF-Tu may protect cognate achiral glycyl-tRNA(Gly) from DTD2-mediated deacetylation. This is D-aminoacyl-tRNA deacylase 2 (DTD2) from Homo sapiens (Human).